Reading from the N-terminus, the 501-residue chain is Putative matrix metalloproteinase (501 aa).

Residues 1 to 26 (MMPQYERKQIIIHISCVIICVVVTLT) form the signal peptide. N-linked (GlcNAc...) asparagine; by host glycosylation is found at asparagine 48, asparagine 58, asparagine 61, asparagine 94, asparagine 116, and asparagine 163. Histidine 179 provides a ligand contact to Zn(2+). Glutamate 180 is an active-site residue. Residues histidine 183 and histidine 189 each coordinate Zn(2+). Asparagine 192, asparagine 267, asparagine 280, and asparagine 291 each carry an N-linked (GlcNAc...) asparagine; by host glycan. A Hemopexin repeat occupies 311–356 (TGHIDTISVIRGELYIFVDEYHWRFRSNGLLYSGYPLKTTHSWSVP). Asparagine 379 and asparagine 493 each carry an N-linked (GlcNAc...) asparagine; by host glycan.

Belongs to the peptidase M10A family. Zn(2+) is required as a cofactor.

In Trichoplusia ni ascovirus 2c (TnAV-2c), this protein is Putative matrix metalloproteinase.